We begin with the raw amino-acid sequence, 87 residues long: U3-theraphotoxin-Hhn1m (87 aa).

A signal peptide spans 1–24 (MVNMKASMFLTFAGLVLLFVVCYA). A propeptide spanning residues 25-52 (SESEEKEFPKEMLSSIFAVDNDFKQEER) is cleaved from the precursor. 3 disulfide bridges follow: Cys54-Cys67, Cys61-Cys72, and Cys66-Cys79.

It belongs to the neurotoxin 10 (Hwtx-1) family. 51 (Hntx-8) subfamily. Hntx-8 sub-subfamily. In terms of tissue distribution, expressed by the venom gland.

The protein resides in the secreted. Ion channel inhibitor. The polypeptide is U3-theraphotoxin-Hhn1m (Cyriopagopus hainanus (Chinese bird spider)).